The following is a 1167-amino-acid chain: RNA-directed RNA polymerase (1167 aa).

The RdRp catalytic domain occupies 553-735 (LTYGILAEAT…KALASYTGLE (183 aa)).

The protein belongs to the reoviridae RNA-directed RNA polymerase family. Interacts with VP3 (Potential). Interacts with VP2 (Potential). Interacts with NSP5; this interaction is probably necessary for the formation of functional virus factories.

The protein localises to the virion. The catalysed reaction is RNA(n) + a ribonucleoside 5'-triphosphate = RNA(n+1) + diphosphate. Its function is as follows. RNA-directed RNA polymerase that is involved in both transcription and genome replication. Together with VP3 capping enzyme, forms an enzyme complex positioned near the channels situated at each of the five-fold vertices of the core. Following infection, the outermost layer of the virus is lost, leaving a double-layered particle (DLP) made up of the core and VP6 shell. VP1 then catalyzes the transcription of fully conservative plus-strand genomic RNAs that are extruded through the DLP's channels into the cytoplasm where they function as mRNAs for translation of viral proteins. One copy of each of the viral (+)RNAs is also recruited during core assembly, together with newly synthesized polymerase complexes and VP2. The polymerase of these novo-formed particles catalyzes the synthesis of complementary minus-strands leading to dsDNA formation. To do so, the polymerase specifically recognizes conserved 3' sequence(s) in plus-strand RNA templates. Once dsRNA synthesis is complete, the polymerase switches to the transcriptional mode, thus providing secondary transcription. This Rotavirus X (strain RVX/Human/China/NADRV-J19/1997/GXP[X]) (RV ADRV-N) protein is RNA-directed RNA polymerase.